A 781-amino-acid polypeptide reads, in one-letter code: Cytosolic phospholipase A2 beta (781 aa).

Positions 1-112 (MAVAEVSRTC…RAGEFRRESF (112 aa)) constitute a C2 domain. Ca(2+) is bound by residues Asp-26, Asp-32, Asp-82, Asp-84, and Asp-90. A PLA2c domain is found at 246–781 (EAGLRELAVR…VQRRRQRRPH (536 aa)). The Nucleophile role is filled by Ser-335. The Proton acceptor role is filled by Asp-615.

Ca(2+) is required as a cofactor. As to expression, widely expressed. Expressed at higher level in brain, heart, liver, cerebellum and pancreas.

It localises to the cytoplasm. Its subcellular location is the cytosol. The protein localises to the mitochondrion membrane. It is found in the early endosome membrane. The catalysed reaction is a 1,2-diacyl-sn-glycero-3-phosphocholine + H2O = a 1-acyl-sn-glycero-3-phosphocholine + a fatty acid + H(+). It catalyses the reaction a 1-acyl-sn-glycero-3-phosphocholine + H2O = sn-glycerol 3-phosphocholine + a fatty acid + H(+). It carries out the reaction 1-hexadecanoyl-2-(9Z,12Z-octadecadienoyl)-sn-glycero-3-phosphoethanolamine + H2O = 1-hexadecanoyl-sn-glycero-3-phosphoethanolamine + (9Z,12Z)-octadecadienoate + H(+). The enzyme catalyses 1-hexadecanoyl-2-(5Z,8Z,11Z,14Z-eicosatetraenoyl)-sn-glycero-3-phosphoethanolamine + H2O = 1-hexadecanoyl-sn-glycero-3-phosphoethanolamine + (5Z,8Z,11Z,14Z)-eicosatetraenoate + H(+). The catalysed reaction is 1-hexadecanoyl-sn-glycero-3-phosphocholine + H2O = sn-glycerol 3-phosphocholine + hexadecanoate + H(+). It catalyses the reaction 1-hexadecanoyl-2-(5Z,8Z,11Z,14Z-eicosatetraenoyl)-sn-glycero-3-phosphocholine + H2O = 1-hexadecanoyl-sn-glycero-3-phosphocholine + (5Z,8Z,11Z,14Z)-eicosatetraenoate + H(+). It carries out the reaction 1-hexadecanoyl-2-(5Z,8Z,11Z,14Z-eicosatetraenoyl)-sn-glycero-3-phosphocholine + H2O = 2-(5Z,8Z,11Z,14Z)-eicosatetraenoyl-sn-glycero-3-phosphocholine + hexadecanoate + H(+). Stimulated by cytosolic Ca(2+). Functionally, calcium-dependent phospholipase A1 and A2 and lysophospholipase that may play a role in membrane phospholipid remodeling. Calcium-dependent phospholipase A2 and lysophospholipase. Cleaves the ester bond of the fatty acyl group attached to the sn-2 position of phosphatidylethanolamines, producing lysophospholipids that may be used in deacylation-reacylation cycles. Hydrolyzes lysophosphatidylcholines with low efficiency but is inefficient toward phosphatidylcholines. Its function is as follows. Calcium-dependent phospholipase A1 and A2 and lysophospholipase. Cleaves the ester bond of the fatty acyl group attached to the sn-1 or sn-2 position of diacyl phospholipids (phospholipase A1 and A2 activity, respectively), producing lysophospholipids that may be used in deacylation-reacylation cycles. Can further hydrolyze lysophospholipids enabling complete deacylation. Has no activity toward alkylacyl phospholipids. The polypeptide is Cytosolic phospholipase A2 beta (PLA2G4B) (Homo sapiens (Human)).